A 188-amino-acid polypeptide reads, in one-letter code: Probable nicotinate-nucleotide adenylyltransferase (188 aa).

This sequence belongs to the NadD family.

It carries out the reaction nicotinate beta-D-ribonucleotide + ATP + H(+) = deamido-NAD(+) + diphosphate. Its pathway is cofactor biosynthesis; NAD(+) biosynthesis; deamido-NAD(+) from nicotinate D-ribonucleotide: step 1/1. Functionally, catalyzes the reversible adenylation of nicotinate mononucleotide (NaMN) to nicotinic acid adenine dinucleotide (NaAD). The chain is Probable nicotinate-nucleotide adenylyltransferase from Rhizobium meliloti (strain 1021) (Ensifer meliloti).